The primary structure comprises 70 residues: Protein SlyX homolog (70 aa).

It belongs to the SlyX family.

The protein is Protein SlyX homolog of Pseudoalteromonas atlantica (strain T6c / ATCC BAA-1087).